We begin with the raw amino-acid sequence, 443 residues long: Histone deacetylase 10, chloroplastic (443 aa).

The N-terminal 65 residues, 1-65, are a transit peptide targeting the chloroplast; sequence MEQLWVPSLP…PSHNGTSISD (65 aa). A histone deacetylase region spans residues 82–412; the sequence is DAHILYCTSP…FRAFLGEPSL (331 aa). His-222 serves as the catalytic Proton donor/acceptor. Zn(2+) is bound by residues Asp-259, His-261, and Asp-346.

It belongs to the histone deacetylase family. Requires Zn(2+) as cofactor. Expressed in leaves. Expressed in coleoptiles, leaves, flag leaves and flowers. Expressed at low levels in roots.

The protein localises to the plastid. It localises to the chloroplast. Its subcellular location is the mitochondrion. The enzyme catalyses N-acetylserotonin + H2O = serotonin + acetate. It catalyses the reaction N-acetyltyramine + H2O = tyramine + acetate. The catalysed reaction is N-acetyltryptamine + H2O = tryptamine + acetate. It carries out the reaction melatonin + H2O = 5-methoxytryptamine + acetate. With respect to regulation, the activity of this enzyme is not inhibited by butyrate, a well-known histone deacetylase inhibitor. Involved in the regulation of melatonin biosynthesis by catalyzing the deacetylation of N-acetylserotonin to produce serotonin. N-acetylserotonin is methylated by acetylserotonin O-methyltransferase (ASMT) to produce melatonin (N-acetyl-5-methoxytryptamine). Deacetylates melatonin to produce 5-methoxytryptamine. In vitro, deacetylates N-acetyltyramine and N-acetyltryptamine to produce tyramine and tryptamine, respectively. The sequence is that of Histone deacetylase 10, chloroplastic from Oryza sativa subsp. japonica (Rice).